Reading from the N-terminus, the 321-residue chain is Cytochrome c biogenesis protein CcsA (321 aa).

Helical transmembrane passes span I17 to I37, K43 to S63, M143 to I163, V225 to N245, E258 to R275, and I287 to G307.

The protein belongs to the CcmF/CycK/Ccl1/NrfE/CcsA family. As to quaternary structure, may interact with Ccs1.

It is found in the plastid. The protein localises to the chloroplast thylakoid membrane. Its function is as follows. Required during biogenesis of c-type cytochromes (cytochrome c6 and cytochrome f) at the step of heme attachment. The chain is Cytochrome c biogenesis protein CcsA from Drimys granadensis.